The following is a 93-amino-acid chain: Bombyxin B-11 (93 aa).

The signal sequence occupies residues methionine 1 to glutamate 22. Cystine bridges form between cysteine 30–cysteine 75, cysteine 42–cysteine 92, and cysteine 74–cysteine 79. Residues glycine 49 to serine 64 constitute a propeptide, bombyxin B-11 C peptide.

The protein belongs to the insulin family. As to quaternary structure, heterodimer of a B chain and an A chain linked by two disulfide bonds.

It is found in the secreted. Functionally, brain peptide responsible for activation of prothoracic glands to produce ecdysone in insects. This Bombyx mori (Silk moth) protein is Bombyxin B-11 (BBXB11).